The chain runs to 262 residues: Indole-3-glycerol phosphate synthase (262 aa).

Belongs to the TrpC family.

It carries out the reaction 1-(2-carboxyphenylamino)-1-deoxy-D-ribulose 5-phosphate + H(+) = (1S,2R)-1-C-(indol-3-yl)glycerol 3-phosphate + CO2 + H2O. It functions in the pathway amino-acid biosynthesis; L-tryptophan biosynthesis; L-tryptophan from chorismate: step 4/5. This is Indole-3-glycerol phosphate synthase from Nitratiruptor sp. (strain SB155-2).